A 119-amino-acid polypeptide reads, in one-letter code: DNA-binding protein TubR (119 aa).

As to quaternary structure, homodimer. Binds to TubZ filaments via the C-terminus of TubZ. DNA is not required for binding to TubZ.

A DNA-binding protein that is part of the type III plasmid partition system used to ensure correct segregation of the pBc10987 plasmid. Binds TubZ filaments but does not influence the GTPase activity of TubZ with or without DNA. Cooperatively binds to multiple regions in tubC (centromere-like site) upstream of its own gene with consensus sequence N(T/A)ATTNC(C/G)GNAAT(A/T)N; probably forms an extended DNA-protein filament. Binds sites in its own promoter region and presumably represses its expression; its effect on RNA expression has not been shown. Does not specifically bind to the putative origin of replication on pBc10987. This chain is DNA-binding protein TubR, found in Bacillus cereus (strain ATCC 10987 / NRS 248).